Consider the following 367-residue polypeptide: Phosphoribosylaminoimidazole-succinocarboxamide synthase (367 aa).

It belongs to the SAICAR synthetase family.

The enzyme catalyses 5-amino-1-(5-phospho-D-ribosyl)imidazole-4-carboxylate + L-aspartate + ATP = (2S)-2-[5-amino-1-(5-phospho-beta-D-ribosyl)imidazole-4-carboxamido]succinate + ADP + phosphate + 2 H(+). It participates in purine metabolism; IMP biosynthesis via de novo pathway; 5-amino-1-(5-phospho-D-ribosyl)imidazole-4-carboxamide from 5-amino-1-(5-phospho-D-ribosyl)imidazole-4-carboxylate: step 1/2. The chain is Phosphoribosylaminoimidazole-succinocarboxamide synthase from Shewanella frigidimarina (strain NCIMB 400).